Consider the following 402-residue polypeptide: MAECPTDLINEMFLRLRATTLVKCRVLSKPCFSLIDSPEFVSSHLRRRLETGEHLMILLRGPRLLRTVELDSPENVSDIPHPLQAGGFTEVFGSFNGVIGLCNSPVDLAIFNPSTRKIHRLPIEPIDFPERDITREYVFYGLGYDSVGDDFKVVRIVQCKLKEGKKKFPCPVEVKVFSLKKNSWKRVCLMFEFQILWISYYYHLLPRRGYGVVVNNHLHWILPRRQGVIAFNAIIKYDLASDDIGVLSFPQELYIEDNMDIGVLDGCVCLMCYDEYSHVDVWVLKEYEDYKSWTKLYRVPKPESVESVEFIRPLICSKDRSKILLEINNAANLMWFDLESQSLTTAGIECDSSFTADILVSSLVLGCKGDPTQAQRSKDQKMMPKSTKRWDGFLSKGFKLKL.

The F-box domain occupies Met1–Leu49.

This chain is F-box protein At4g22390, found in Arabidopsis thaliana (Mouse-ear cress).